The following is a 336-amino-acid chain: Eukaryotic translation initiation factor 3 subunit I (336 aa).

6 WD repeats span residues 8-49, 50-91, 93-135, 144-183, 187-226, and 285-324; these read GHER…GTYN, GHNG…KAWE, PTAI…GPQP, PIGSKAQVVAFSSLDKHLITGHENGKVALWDVNTGEEVAS, NHIGLITDLQMSADRTYFVTSSKDKSARLYDSRTLEVIKS, and GGFGPCNSIAVHPEGKGYAIGGEDGYVRLHHFDENTFRAK.

This sequence belongs to the eIF-3 subunit I family. As to quaternary structure, component of the eukaryotic translation initiation factor 3 (eIF-3) complex.

The protein resides in the cytoplasm. Functionally, component of the eukaryotic translation initiation factor 3 (eIF-3) complex, which is involved in protein synthesis of a specialized repertoire of mRNAs and, together with other initiation factors, stimulates binding of mRNA and methionyl-tRNAi to the 40S ribosome. The eIF-3 complex specifically targets and initiates translation of a subset of mRNAs involved in cell proliferation. The chain is Eukaryotic translation initiation factor 3 subunit I from Puccinia graminis f. sp. tritici (strain CRL 75-36-700-3 / race SCCL) (Black stem rust fungus).